We begin with the raw amino-acid sequence, 257 residues long: E3 ubiquitin-protein ligase RNF170 (257 aa).

At 1–24 (MADNQEERPHFPLDEGSIIEGVSD) the chain is on the lumenal side. Residues 25 to 45 (QVIVVVLLSFVAVGSLIYLLL) traverse the membrane as a helical segment. Residues 46–200 (RNDEQNIHPE…GGLFWMFRIR (155 aa)) are Cytoplasmic-facing. An RING-type zinc finger spans residues 87–130 (CPVCLQQATFPVETNCGHLFCGSCIIAYWRYGTWLGAINCPICR). Residues 201–221 (IVLCLLGALLYLVSPLDIIPE) form a helical membrane-spanning segment. Residue Ala222 is a topological domain, lumenal. A helical membrane pass occupies residues 223 to 243 (LFGILGFLDDLFVLFLLLIYI). Residues 244-257 (SIMYREVVTQRLYR) are Cytoplasmic-facing.

It is found in the endoplasmic reticulum membrane. The catalysed reaction is S-ubiquitinyl-[E2 ubiquitin-conjugating enzyme]-L-cysteine + [acceptor protein]-L-lysine = [E2 ubiquitin-conjugating enzyme]-L-cysteine + N(6)-ubiquitinyl-[acceptor protein]-L-lysine.. It functions in the pathway protein modification; protein ubiquitination. E3 ubiquitin-protein ligase that plays an essential role in stimulus-induced inositol 1,4,5-trisphosphate receptor (ITPR) ubiquitination and degradation via the endoplasmic reticulum-associated degradation (ERAD) pathway. Also involved in ITPR turnover in resting cells. This Xenopus laevis (African clawed frog) protein is E3 ubiquitin-protein ligase RNF170 (rnf170).